Reading from the N-terminus, the 423-residue chain is N-acylneuraminate cytidylyltransferase B (423 aa).

Substrate is bound by residues R30, N40, R88, S97, S99, and Q120. The active site involves R178.

The protein belongs to the CMP-NeuNAc synthase family. Homotetramer.

The protein resides in the cytoplasm. It catalyses the reaction an N-acylneuraminate + CTP = a CMP-N-acyl-beta-neuraminate + diphosphate. Its pathway is amino-sugar metabolism; N-acetylneuraminate metabolism. Functionally, catalyzes the activation of 2-keto-3-deoxy-D-glycero-D-galacto-nononic acid (KDN) to cytidine 5'-monophosphate 2-keto-3-deoxy-D-glycero-D-galacto-nononic acid (CMP-KDN), a substrate required for the addition of sialic acid. Also has weak activity towards N-acetylneuraminic acid (NeuNAc) and N-glycolylneuraminic acid (Neu5Gc). The protein is N-acylneuraminate cytidylyltransferase B of Danio rerio (Zebrafish).